Reading from the N-terminus, the 485-residue chain is Benzaldehyde dehydrogenase YfmT (485 aa).

NAD(+) is bound at residue 231 to 236 (GSTKVG). Active-site residues include E253 and C287.

The protein belongs to the aldehyde dehydrogenase family.

It catalyses the reaction benzaldehyde + NAD(+) + H2O = benzoate + NADH + 2 H(+). The catalysed reaction is vanillin + NAD(+) + H2O = vanillate + NADH + 2 H(+). Functionally, a benzaldehyde dehydrogenase able to act on substrates with 3- and 4-hydroxy and methoxy substitutions; converts vanillin (4-hydroxy-3-methoxybenzaldehyde) to vanillic acid in vitro. The physiological substrate is unknown. The chain is Benzaldehyde dehydrogenase YfmT (yfmT) from Bacillus subtilis (strain 168).